Reading from the N-terminus, the 353-residue chain is S-adenosylmethionine:tRNA ribosyltransferase-isomerase (353 aa).

It belongs to the QueA family. In terms of assembly, monomer.

It localises to the cytoplasm. It catalyses the reaction 7-aminomethyl-7-carbaguanosine(34) in tRNA + S-adenosyl-L-methionine = epoxyqueuosine(34) in tRNA + adenine + L-methionine + 2 H(+). The protein operates within tRNA modification; tRNA-queuosine biosynthesis. Its function is as follows. Transfers and isomerizes the ribose moiety from AdoMet to the 7-aminomethyl group of 7-deazaguanine (preQ1-tRNA) to give epoxyqueuosine (oQ-tRNA). In Cupriavidus metallidurans (strain ATCC 43123 / DSM 2839 / NBRC 102507 / CH34) (Ralstonia metallidurans), this protein is S-adenosylmethionine:tRNA ribosyltransferase-isomerase.